Here is a 749-residue protein sequence, read N- to C-terminus: Photosystem I P700 chlorophyll a apoprotein A1 (749 aa).

8 helical membrane-spanning segments follow: residues Val-70–Ala-93, Leu-156–His-179, Leu-195–Leu-219, Thr-291–Tyr-309, Trp-346–Tyr-369, Leu-385–Val-411, Ala-433–His-455, and Phe-531–Leu-549. [4Fe-4S] cluster-binding residues include Cys-573 and Cys-582. Transmembrane regions (helical) follow at residues His-589–Trp-610 and Leu-663–Phe-685. His-674 is a chlorophyll a' binding site. 2 residues coordinate chlorophyll a: Met-682 and Tyr-690. A phylloquinone-binding site is contributed by Trp-691. Residues Ala-723 to Ala-743 form a helical membrane-spanning segment.

Belongs to the PsaA/PsaB family. As to quaternary structure, the PsaA/B heterodimer binds the P700 chlorophyll special pair and subsequent electron acceptors. PSI consists of a core antenna complex that captures photons, and an electron transfer chain that converts photonic excitation into a charge separation. The eukaryotic PSI reaction center is composed of at least 11 subunits. It depends on P700 is a chlorophyll a/chlorophyll a' dimer, A0 is one or more chlorophyll a, A1 is one or both phylloquinones and FX is a shared 4Fe-4S iron-sulfur center. as a cofactor.

The protein localises to the plastid. Its subcellular location is the chloroplast thylakoid membrane. The catalysed reaction is reduced [plastocyanin] + hnu + oxidized [2Fe-2S]-[ferredoxin] = oxidized [plastocyanin] + reduced [2Fe-2S]-[ferredoxin]. Functionally, psaA and PsaB bind P700, the primary electron donor of photosystem I (PSI), as well as the electron acceptors A0, A1 and FX. PSI is a plastocyanin-ferredoxin oxidoreductase, converting photonic excitation into a charge separation, which transfers an electron from the donor P700 chlorophyll pair to the spectroscopically characterized acceptors A0, A1, FX, FA and FB in turn. Oxidized P700 is reduced on the lumenal side of the thylakoid membrane by plastocyanin. The protein is Photosystem I P700 chlorophyll a apoprotein A1 of Zygnema circumcarinatum (Green alga).